The following is a 472-amino-acid chain: Argininosuccinate lyase (472 aa).

It belongs to the lyase 1 family. Argininosuccinate lyase subfamily.

Its subcellular location is the cytoplasm. It carries out the reaction 2-(N(omega)-L-arginino)succinate = fumarate + L-arginine. It functions in the pathway amino-acid biosynthesis; L-arginine biosynthesis; L-arginine from L-ornithine and carbamoyl phosphate: step 3/3. The polypeptide is Argininosuccinate lyase (Mycobacterium avium (strain 104)).